Here is a 185-residue protein sequence, read N- to C-terminus: Ribosome-recycling factor (185 aa).

The protein belongs to the RRF family.

It localises to the cytoplasm. Responsible for the release of ribosomes from messenger RNA at the termination of protein biosynthesis. May increase the efficiency of translation by recycling ribosomes from one round of translation to another. The polypeptide is Ribosome-recycling factor (Vibrio vulnificus (strain YJ016)).